Consider the following 572-residue polypeptide: Phosphoglucomutase-1 (572 aa).

Residues Thr23, Arg27, 120–121 (SH), and Lys133 each bind substrate. Ser120 serves as the catalytic Phosphoserine intermediate. Ser120 lines the Mg(2+) pocket. Positions 288, 290, and 292 each coordinate Mg(2+). Substrate is bound by residues 292 to 293 (DR), Thr356, 375 to 377 (EES), Lys388, and Arg524.

It belongs to the phosphohexose mutase family. Mg(2+) serves as cofactor.

The protein localises to the cytoplasm. It carries out the reaction alpha-D-glucose 1-phosphate = alpha-D-glucose 6-phosphate. Its function is as follows. This enzyme participates in both the breakdown and synthesis of glucose. This is Phosphoglucomutase-1 (pgmA) from Dictyostelium discoideum (Social amoeba).